The chain runs to 221 residues: MIEDETKGENKMNRGRLILTNIIGLIVVLAIIAGGAYYYYQSTNYVKTDEAKVAGDMAAITAPAAGKVSDWDLDEGKTVKKGDTVAKIKGEQTVDVKSIMDGTIVKNEVKNGQTVQAGTTIAQTIDMDNLYITANIKETDIADIEVGNSVDVVVDGDPDTTFDGTVEEIGYATNSTFDMLPSTNSSGNYTKVTQKVPVKISIKNPSDKVLPGMNASVKISE.

A helical transmembrane segment spans residues 17 to 37 (LILTNIIGLIVVLAIIAGGAY).

Belongs to the membrane fusion protein (MFP) (TC 8.A.1) family.

Its subcellular location is the cell membrane. The polypeptide is Putative efflux system component YhbJ (yhbJ) (Bacillus subtilis (strain 168)).